Consider the following 135-residue polypeptide: Galectin-1 (135 aa).

The residue at position 2 (alanine 2) is an N-acetylalanine. Residues 4-135 (GLVASNLNLK…DFKIKCVAFD (132 aa)) form the Galectin domain. Lysine 13 and lysine 29 each carry N6-acetyllysine. Position 30 is a phosphoserine; by FAM20C (serine 30). A beta-D-galactoside contacts are provided by residues 45-49 (HFNPR), histidine 53, asparagine 62, and 69-72 (WGTE). Lysine 108 bears the N6-acetyllysine; alternate mark. Lysine 108 carries the post-translational modification N6-succinyllysine; alternate. Lysine 128 carries the N6-acetyllysine modification.

In terms of assembly, homodimer. Binds LGALS3BP. Interacts with CD2, CD3, CD4, CD6, CD7, CD43, ALCAM and CD45. Interacts with laminin (via poly-N-acetyllactosamine). Interacts with SUSD2. Interacts with cargo receptor TMED10; the interaction mediates the translocation from the cytoplasm into the ERGIC (endoplasmic reticulum-Golgi intermediate compartment) and thereby secretion. Interacts with CD69. In terms of tissue distribution, expressed in placenta, maternal decidua and fetal membranes. Within placenta, expressed in trophoblasts, stromal cells, villous endothelium, syncytiotrophoblast apical membrane and villous stroma. Within fetal membranes, expressed in amnion, chorioamniotic mesenchyma and chorion (at protein level). Expressed in cardiac, smooth, and skeletal muscle, neurons, thymus, kidney and hematopoietic cells.

The protein localises to the secreted. Its subcellular location is the extracellular space. It localises to the extracellular matrix. The protein resides in the cytoplasm. Functionally, lectin that binds beta-galactoside and a wide array of complex carbohydrates. Plays a role in regulating apoptosis, cell proliferation and cell differentiation. Inhibits CD45 protein phosphatase activity and therefore the dephosphorylation of Lyn kinase. Strong inducer of T-cell apoptosis. Plays a negative role in Th17 cell differentiation via activation of the receptor CD69. The protein is Galectin-1 of Homo sapiens (Human).